A 188-amino-acid polypeptide reads, in one-letter code: Elongation factor P (188 aa).

It belongs to the elongation factor P family.

It localises to the cytoplasm. It participates in protein biosynthesis; polypeptide chain elongation. In terms of biological role, involved in peptide bond synthesis. Stimulates efficient translation and peptide-bond synthesis on native or reconstituted 70S ribosomes in vitro. Probably functions indirectly by altering the affinity of the ribosome for aminoacyl-tRNA, thus increasing their reactivity as acceptors for peptidyl transferase. This Malacoplasma penetrans (strain HF-2) (Mycoplasma penetrans) protein is Elongation factor P.